A 379-amino-acid polypeptide reads, in one-letter code: 1-deoxy-D-xylulose 5-phosphate reductoisomerase (379 aa).

NADPH-binding residues include T10, G11, S12, I13, G36, N38, and N121. K122 contributes to the 1-deoxy-D-xylulose 5-phosphate binding site. E123 is a binding site for NADPH. A Mn(2+)-binding site is contributed by D147. Residues S148, E149, S173, and H196 each coordinate 1-deoxy-D-xylulose 5-phosphate. E149 lines the Mn(2+) pocket. G202 contacts NADPH. 1-deoxy-D-xylulose 5-phosphate contacts are provided by S209, N214, K215, and E218. E218 contacts Mn(2+).

The protein belongs to the DXR family. Mg(2+) serves as cofactor. It depends on Mn(2+) as a cofactor.

The catalysed reaction is 2-C-methyl-D-erythritol 4-phosphate + NADP(+) = 1-deoxy-D-xylulose 5-phosphate + NADPH + H(+). It functions in the pathway isoprenoid biosynthesis; isopentenyl diphosphate biosynthesis via DXP pathway; isopentenyl diphosphate from 1-deoxy-D-xylulose 5-phosphate: step 1/6. Its function is as follows. Catalyzes the NADPH-dependent rearrangement and reduction of 1-deoxy-D-xylulose-5-phosphate (DXP) to 2-C-methyl-D-erythritol 4-phosphate (MEP). This Shouchella clausii (strain KSM-K16) (Alkalihalobacillus clausii) protein is 1-deoxy-D-xylulose 5-phosphate reductoisomerase.